Reading from the N-terminus, the 657-residue chain is tRNA uridine 5-carboxymethylaminomethyl modification enzyme MnmG (657 aa).

13–18 lines the FAD pocket; it reads GGGHAG. 281–295 contributes to the NAD(+) binding site; the sequence is GPRYCPSVEDKINRF.

Belongs to the MnmG family. As to quaternary structure, homodimer. Heterotetramer of two MnmE and two MnmG subunits. FAD serves as cofactor.

It localises to the cytoplasm. Functionally, NAD-binding protein involved in the addition of a carboxymethylaminomethyl (cmnm) group at the wobble position (U34) of certain tRNAs, forming tRNA-cmnm(5)s(2)U34. In Acidovorax ebreus (strain TPSY) (Diaphorobacter sp. (strain TPSY)), this protein is tRNA uridine 5-carboxymethylaminomethyl modification enzyme MnmG.